Reading from the N-terminus, the 913-residue chain is Chitin synthase 1 (913 aa).

Positions 1–135 (MAYRGGGPND…QQPGAQTGGL (135 aa)) are disordered. Asn-25 carries an N-linked (GlcNAc...) asparagine glycan. Over residues 41–56 (RDPHARGTSPYEHHLG) the composition is skewed to basic and acidic residues. An N-linked (GlcNAc...) asparagine glycan is attached at Asn-539. The next 7 helical transmembrane spans lie at 566–586 (FFFHIQLIYNVLNVIFTWFSL), 625–645 (IINSILQYLYLAFLVIQFVLA), 658–678 (IASFIVFGFIQTYILVLSGYL), 712–732 (VILVALVTIYGLNFIASFMYL), 740–760 (SFPYYLVLMSTYINILMVYAF), 840–860 (TGLVVSWLFSNAALIVFITTD), and 881–901 (FLLYSTAVLALVRFTGFLWFL).

The protein belongs to the chitin synthase family. Class III subfamily.

It is found in the cell membrane. It carries out the reaction [(1-&gt;4)-N-acetyl-beta-D-glucosaminyl](n) + UDP-N-acetyl-alpha-D-glucosamine = [(1-&gt;4)-N-acetyl-beta-D-glucosaminyl](n+1) + UDP + H(+). Functionally, polymerizes chitin, a structural polymer of the cell wall and septum, by transferring the sugar moiety of UDP-GlcNAc to the non-reducing end of the growing chitin polymer. Plays a role in cell wall integrity and is involved in tolerance to hyperosmotic conditions. Required to successfully penetrate the host plants and thus plays a key role in pathogenicity. This is Chitin synthase 1 from Verticillium dahliae (strain VdLs.17 / ATCC MYA-4575 / FGSC 10137) (Verticillium wilt).